Reading from the N-terminus, the 154-residue chain is Crossover junction endodeoxyribonuclease RuvC (154 aa).

Active-site residues include Asp-7, Glu-67, and Asp-139. Positions 7, 67, and 139 each coordinate Mg(2+).

It belongs to the RuvC family. As to quaternary structure, homodimer which binds Holliday junction (HJ) DNA. The HJ becomes 2-fold symmetrical on binding to RuvC with unstacked arms; it has a different conformation from HJ DNA in complex with RuvA. In the full resolvosome a probable DNA-RuvA(4)-RuvB(12)-RuvC(2) complex forms which resolves the HJ. Mg(2+) serves as cofactor.

The protein localises to the cytoplasm. It catalyses the reaction Endonucleolytic cleavage at a junction such as a reciprocal single-stranded crossover between two homologous DNA duplexes (Holliday junction).. In terms of biological role, the RuvA-RuvB-RuvC complex processes Holliday junction (HJ) DNA during genetic recombination and DNA repair. Endonuclease that resolves HJ intermediates. Cleaves cruciform DNA by making single-stranded nicks across the HJ at symmetrical positions within the homologous arms, yielding a 5'-phosphate and a 3'-hydroxyl group; requires a central core of homology in the junction. The consensus cleavage sequence is 5'-(A/T)TT(C/G)-3'. Cleavage occurs on the 3'-side of the TT dinucleotide at the point of strand exchange. HJ branch migration catalyzed by RuvA-RuvB allows RuvC to scan DNA until it finds its consensus sequence, where it cleaves and resolves the cruciform DNA. In Parasynechococcus marenigrum (strain WH8102), this protein is Crossover junction endodeoxyribonuclease RuvC.